Consider the following 454-residue polypeptide: Inner membrane transport protein YajR (454 aa).

At 1-14 (MNDYKMTPGERRAT) the chain is on the periplasmic side. The chain crosses the membrane as a helical span at residues 15–35 (WGLGTVFSLRMLGMFMVLPVL). At 36-47 (TTYGMALQGASE) the chain is on the cytoplasmic side. A helical membrane pass occupies residues 48-68 (ALIGIAIGIYGLTQAVFQIPF). The Periplasmic portion of the chain corresponds to 69–84 (GLLSDRIGRKPLIVGG). A helical membrane pass occupies residues 85–105 (LAVFAAGSVIAALSDSIWGII). The Cytoplasmic segment spans residues 106 to 137 (LGRALQGSGAIAAAVMALLSDLTREQNRTKAM). The helical transmembrane segment at 138-158 (AFIGVSFGITFAIAMVLGPII) threads the bilayer. Over 159-165 (THKLGLH) the chain is Periplasmic. The chain crosses the membrane as a helical span at residues 166–186 (ALFWMIAILATTGIALTIWVV). The Cytoplasmic segment spans residues 187–216 (PNSSTHVLNRESGMVKGSFSKVLAEPRLLK). A helical transmembrane segment spans residues 217-237 (LNFGIMCLHILLMSTFVALPG). At 238 to 252 (QLADAGFPAAEHWKV) the chain is on the periplasmic side. A helical transmembrane segment spans residues 253-273 (YLATMLIAFGSVVPFIIYAEV). The Cytoplasmic segment spans residues 274 to 279 (KRKMKQ). Residues 280–300 (VFVFCVGLIVVAEIVLWNAQT) form a helical membrane-spanning segment. The Periplasmic segment spans residues 301-306 (QFWQLV). Residues 307 to 327 (VGVQLFFVAFNLMEALLPSLI) form a helical membrane-spanning segment. Residues 328–340 (SKESPAGYKGTAM) lie on the Cytoplasmic side of the membrane. A helical membrane pass occupies residues 341–361 (GVYSTSQFLGVAIGGSLGGWI). Over 362-363 (NG) the chain is Periplasmic. Residues 364–384 (MFDGQGVFLAGAMLAAVWLTV) form a helical membrane-spanning segment. The Cytoplasmic portion of the chain corresponds to 385-454 (ASTMKEPPYV…FEIEQAIRQA (70 aa)).

It belongs to the major facilitator superfamily.

It localises to the cell inner membrane. The chain is Inner membrane transport protein YajR (yajR) from Escherichia coli (strain K12).